We begin with the raw amino-acid sequence, 178 residues long: Large ribosomal subunit protein uL6 (178 aa).

This sequence belongs to the universal ribosomal protein uL6 family. As to quaternary structure, part of the 50S ribosomal subunit.

In terms of biological role, this protein binds to the 23S rRNA, and is important in its secondary structure. It is located near the subunit interface in the base of the L7/L12 stalk, and near the tRNA binding site of the peptidyltransferase center. The sequence is that of Large ribosomal subunit protein uL6 from Nitratiruptor sp. (strain SB155-2).